A 67-amino-acid polypeptide reads, in one-letter code: uncharacterized protein (67 aa).

This is an uncharacterized protein from Dictyostelium discoideum (Social amoeba).